Here is a 255-residue protein sequence, read N- to C-terminus: 1-(5-phosphoribosyl)-5-[(5-phosphoribosylamino)methylideneamino] imidazole-4-carboxamide isomerase (255 aa).

Residue Asp-8 is the Proton acceptor of the active site. The active-site Proton donor is the Asp-129.

Belongs to the HisA/HisF family.

It localises to the cytoplasm. The enzyme catalyses 1-(5-phospho-beta-D-ribosyl)-5-[(5-phospho-beta-D-ribosylamino)methylideneamino]imidazole-4-carboxamide = 5-[(5-phospho-1-deoxy-D-ribulos-1-ylimino)methylamino]-1-(5-phospho-beta-D-ribosyl)imidazole-4-carboxamide. It participates in amino-acid biosynthesis; L-histidine biosynthesis; L-histidine from 5-phospho-alpha-D-ribose 1-diphosphate: step 4/9. The sequence is that of 1-(5-phosphoribosyl)-5-[(5-phosphoribosylamino)methylideneamino] imidazole-4-carboxamide isomerase from Prochlorococcus marinus (strain MIT 9515).